Here is a 172-residue protein sequence, read N- to C-terminus: Thioredoxin Y1, chloroplastic (172 aa).

The N-terminal 62 residues, 1–62 (MASISLSSST…SSTTRCTPRR (62 aa)), are a transit peptide targeting the chloroplast. Residues 63-169 (IEAKKQTFDS…LIQRIEDSLK (107 aa)) enclose the Thioredoxin domain. Catalysis depends on nucleophile residues cysteine 93 and cysteine 96. Cysteine 93 and cysteine 96 form a disulfide bridge.

This sequence belongs to the thioredoxin family. Plant Y-type subfamily. In terms of tissue distribution, expressed in roots and seeds.

The protein resides in the plastid. It is found in the chloroplast stroma. Functionally, thiol-disulfide oxidoreductase that poorly activates chloroplastic malate dehydrogenase (NADP-MDH) and fructose-1,6-bisphosphatase. Provides reducing equivalents for peroxiredoxin Q. This is Thioredoxin Y1, chloroplastic from Arabidopsis thaliana (Mouse-ear cress).